Reading from the N-terminus, the 86-residue chain is Co-chaperonin GroES (86 aa).

The protein belongs to the GroES chaperonin family. As to quaternary structure, heptamer of 7 subunits arranged in a ring. Interacts with the chaperonin GroEL.

The protein localises to the cytoplasm. Its function is as follows. Together with the chaperonin GroEL, plays an essential role in assisting protein folding. The GroEL-GroES system forms a nano-cage that allows encapsulation of the non-native substrate proteins and provides a physical environment optimized to promote and accelerate protein folding. GroES binds to the apical surface of the GroEL ring, thereby capping the opening of the GroEL channel. This is Co-chaperonin GroES from Campylobacter curvus (strain 525.92).